Here is a 246-residue protein sequence, read N- to C-terminus: 1-(5-phosphoribosyl)-5-[(5-phosphoribosylamino)methylideneamino] imidazole-4-carboxamide isomerase (246 aa).

Asp-8 serves as the catalytic Proton acceptor. Asp-130 acts as the Proton donor in catalysis.

This sequence belongs to the HisA/HisF family.

The protein resides in the cytoplasm. The catalysed reaction is 1-(5-phospho-beta-D-ribosyl)-5-[(5-phospho-beta-D-ribosylamino)methylideneamino]imidazole-4-carboxamide = 5-[(5-phospho-1-deoxy-D-ribulos-1-ylimino)methylamino]-1-(5-phospho-beta-D-ribosyl)imidazole-4-carboxamide. It functions in the pathway amino-acid biosynthesis; L-histidine biosynthesis; L-histidine from 5-phospho-alpha-D-ribose 1-diphosphate: step 4/9. In Alcanivorax borkumensis (strain ATCC 700651 / DSM 11573 / NCIMB 13689 / SK2), this protein is 1-(5-phosphoribosyl)-5-[(5-phosphoribosylamino)methylideneamino] imidazole-4-carboxamide isomerase.